The primary structure comprises 197 residues: Shikimate kinase (197 aa).

Residue 26–31 (GSGKSR) participates in ATP binding. Ser30 is a binding site for Mg(2+). Positions 48, 72, and 94 each coordinate substrate. Position 132 (Arg132) interacts with ATP. Arg150 contacts substrate.

It belongs to the shikimate kinase family. As to quaternary structure, monomer. Mg(2+) serves as cofactor.

The protein localises to the cytoplasm. It carries out the reaction shikimate + ATP = 3-phosphoshikimate + ADP + H(+). Its pathway is metabolic intermediate biosynthesis; chorismate biosynthesis; chorismate from D-erythrose 4-phosphate and phosphoenolpyruvate: step 5/7. Its function is as follows. Catalyzes the specific phosphorylation of the 3-hydroxyl group of shikimic acid using ATP as a cosubstrate. The sequence is that of Shikimate kinase from Prochlorococcus marinus (strain MIT 9211).